The primary structure comprises 79 residues: MRLIIRAIVLFALVWIGLLMSGYGILVGSKVNAAGLGLQCHYLTARGTSTAQYLHTNSGIIGFSDCPIFRKIATVVDNG.

The first 33 residues, 1–33, serve as a signal peptide directing secretion; the sequence is MRLIIRAIVLFALVWIGLLMSGYGILVGSKVNA.

This is an uncharacterized protein from Salmonella choleraesuis (strain SC-B67).